Consider the following 491-residue polypeptide: Glutamate--tRNA ligase (491 aa).

Positions 14-24 (PSPTGSPHVGL) match the 'HIGH' region motif. 4 residues coordinate Zn(2+): Cys-111, Cys-113, Cys-136, and Asp-138. A 'KMSKS' region motif is present at residues 257-261 (KLSKR). Lys-260 serves as a coordination point for ATP.

This sequence belongs to the class-I aminoacyl-tRNA synthetase family. Glutamate--tRNA ligase type 1 subfamily. Monomer. Requires Zn(2+) as cofactor.

Its subcellular location is the cytoplasm. The catalysed reaction is tRNA(Glu) + L-glutamate + ATP = L-glutamyl-tRNA(Glu) + AMP + diphosphate. In terms of biological role, catalyzes the attachment of glutamate to tRNA(Glu) in a two-step reaction: glutamate is first activated by ATP to form Glu-AMP and then transferred to the acceptor end of tRNA(Glu). This Nocardioides sp. (strain ATCC BAA-499 / JS614) protein is Glutamate--tRNA ligase.